The following is a 1468-amino-acid chain: MSSKSEKLEKLRKLQAARNGTSIDDYEGDESDGDRIYDEIDEKEYRARKRQELLHDDFVVDDDGVGYVDRGVEEDWREVDNSSSDEDTGNLASKDSKRKKNIKREKDHQITDMLRTQHSKSTLLAHAKKSQKKSIPIDNFDDILGEFESGEVEKPNILLPSKLRENLNSSPTSEFKSSIKRVNGNDESSHDAGISKKVKIDPDSSTDKYLEIESSPLKLQSRKLRYANDVQDLLDDVENSPVVATKRQNVLQDTLLANPPSAQSLADEEDDEDSDEDIILKRRTMRSVTTTRRVNIDSRSNPSTSPFVTAPGTPIGIKGLTPSKSLQSNTDVATLAVNVKKEDVVDPETDTFQMFWLDYCEVNNTLILFGKVKLKDDNCVSAMVQINGLCRELFFLPREGKTPTDIHEEIIPLLMDKYGLDNIRAKPQKMKYSFELPDIPSESDYLKVLLPYQTPKSSRDTIPSDLSSDTFYHVFGGNSNIFESFVIQNRIMGPCWLDIKGADFNSIRNASHCAVEVSVDKPQNITPTTTKTMPNLRCLSLSIQTLMNPKENKQEIVSITLSAYRNISLDSPIPENIKPDDLCTLVRPPQSTSFPLGLAALAKQKLPGRVRLFNNEKAMLSCFCAMLKVEDPDVIIGHRLQNVYLDVLAHRMHDLNIPTFSSIGRRLRRTWPEKFGRGNSNMNHFFISDICSGRLICDIANEMGQSLTPKCQSWDLSEMYQVTCEKEHKPLDIDYQNPQYQNDVNSMTMALQENITNCMISAEVSYRIQLLTLTKQLTNLAGNAWAQTLGGTRAGRNEYILLHEFSRNGFIVPDKEGNRSRAQKQRQNEENADAPVNSKKAKYQGGLVFEPEKGLHKNYVLVMDFNSLYPSIIQEFNICFTTVDRNKEDIDELPSVPPSEVDQGVLPRLLANLVDRRREVKKVMKTETDPHKRVQCDIRQQALKLTANSMYGCLGYVNSRFYAKPLAMLVTNKGREILMNTRQLAESMNLLVVYGDTDSVMIDTGCDNYADAIKIGLGFKRLVNERYRLLEIDIDNVFKKLLLHAKKKYAALTVNLDKNGNGTTVLEVKGLDMKRREFCPLSRDVSIHVLNTILSDKDPEEALQEVYDYLEDIRIKVETNNIRIDKYKINMKLSKDPKAYPGGKNMPAVQVALRMRKAGRVVKAGSVITFVITKQDEIDNAADTPALSVAERAHALNEVMIKSNNLIPDPQYYLEKQIFAPVERLLERIDSFNVVRLSEALGLDSKKYFRREGGNNNGEDINNLQPLETTITDVERFKDTVTLELSCPSCDKRFPFGGIVSSNYYRVSYNGLQCKHCEQLFTPLQLTSQIEHSIRAHISLYYAGWLQCDDSTCGIVTRQVSVFGKRCLNDGCTGVMRYKYSDKQLYNQLLYFDSLFDCEKNKKQELKPIYLPDDLDYPKEQLTESSIKALTEQNRELMETGRSVVQKYLNDCGRRYVDMTSIFDFMLN.

Residues 1 to 12 show a composition bias toward basic and acidic residues; that stretch reads MSSKSEKLEKLR. Disordered stretches follow at residues 1–34, 71–135, and 166–205; these read MSSK…SDGD, GVEE…KKSI, and NLNS…PDSS. S2 is subject to N-acetylserine. The residue at position 31 (S31) is a Phosphoserine. A compositionally biased stretch (basic and acidic residues) spans 71–80; it reads GVEEDWREVD. A phosphoserine mark is found at S82, S83, S84, S169, and S170. Over residues 166-176 the composition is skewed to polar residues; the sequence is NLNSSPTSEFK. Residue T172 is modified to Phosphothreonine. A compositionally biased stretch (basic and acidic residues) spans 183–205; it reads NGNDESSHDAGISKKVKIDPDSS. 2 positions are modified to phosphoserine: S240 and S274. The segment at 256–275 is disordered; it reads LANPPSAQSLADEEDDEDSD. A compositionally biased stretch (acidic residues) spans 266 to 275; the sequence is ADEEDDEDSD. A phosphothreonine mark is found at T309 and T313. The tract at residues 813-837 is disordered; that stretch reads PDKEGNRSRAQKQRQNEENADAPVN. Positions 1246 to 1381 are DNA-binding; that stretch reads KKYFRREGGN…CTGVMRYKYS (136 aa). Zn(2+)-binding residues include C1287, C1290, C1314, C1317, C1348, C1353, C1367, and C1372. A CysA-type zinc finger spans residues 1287–1317; that stretch reads CPSCDKRFPFGGIVSSNYYRVSYNGLQCKHC. Residues 1348 to 1372 carry the CysB motif motif; the sequence is CDDSTCGIVTRQVSVFGKRCLNDGC.

The protein belongs to the DNA polymerase type-B family. DNA polymerase alpha:primase is a four subunit enzyme complex, which is assembled throughout the cell cycle, and consists of the two DNA polymerase subunits A POL1 and B POL12, and the DNA primase large PRI2 and small PRI1 subunits. Subunit B POL12 binds to subunit A POL1. POL1 interacts with CDC13, POB3, SPT16 and MCM10.

Its subcellular location is the nucleus. It carries out the reaction DNA(n) + a 2'-deoxyribonucleoside 5'-triphosphate = DNA(n+1) + diphosphate. In terms of biological role, catalytic component of DNA polymerase alpha, which in complex with DNA primase (DNA polymerase alpha:primase) constitutes a replicative polymerase. POL1 has a role in promoting telomere replication during interaction with CDC13. The chain is DNA polymerase alpha catalytic subunit A (POL1) from Saccharomyces cerevisiae (strain ATCC 204508 / S288c) (Baker's yeast).